Here is a 272-residue protein sequence, read N- to C-terminus: METYAVFGNPIAHSKSPFIHQQFAQQLNIEHPYGRVLAPINDFINTLNAFFRAGGKGANVTVPFKEEAFARADELTERAALAGAVNTLKRLEDGRLLGDNTDGIGLLSDLERLSFIRPGLRILLIGAGGASRGVLLPLLSLDCAVTITNRTVSRAEELAKLFAHTGSIQALGMDELEGHEFDLIINATSSGISGDIPAIPSSLIHPGIYCYDMFYQKGKTPFLAWCEQRGSKRNADGLGMLVAQAAHAFLLWHGVLPDVEPVIKQLQEELSA.

Shikimate is bound by residues 14 to 16 (SKS) and T61. The active-site Proton acceptor is K65. E77 contacts NADP(+). Shikimate is bound by residues N86 and D102. NADP(+)-binding positions include 126–130 (GAGGA), 149–154 (NRTVSR), and M213. Residue Y215 coordinates shikimate. G237 serves as a coordination point for NADP(+).

It belongs to the shikimate dehydrogenase family. As to quaternary structure, homodimer.

It catalyses the reaction shikimate + NADP(+) = 3-dehydroshikimate + NADPH + H(+). It participates in metabolic intermediate biosynthesis; chorismate biosynthesis; chorismate from D-erythrose 4-phosphate and phosphoenolpyruvate: step 4/7. In terms of biological role, involved in the biosynthesis of the chorismate, which leads to the biosynthesis of aromatic amino acids. Catalyzes the reversible NADPH linked reduction of 3-dehydroshikimate (DHSA) to yield shikimate (SA). The polypeptide is Shikimate dehydrogenase (NADP(+)) (Escherichia coli O139:H28 (strain E24377A / ETEC)).